The following is a 248-amino-acid chain: Conoporin-Cn1 (248 aa).

The N-terminal stretch at 1–23 is a signal peptide; sequence MGVQFPALKTMVTVFLLLMGNMS. Positions 45-64 are N-terminal region; that stretch reads TPGSSLYGVALKDLADTSYN. Residues G120, S138, P140, Y167, and Y171 each coordinate phosphocholine.

It belongs to the actinoporin family. Conoidea subfamily. In terms of assembly, octamer or nonamer in membranes. Monomer in the soluble state. In terms of processing, 9 isoforms are detected in the injectable venom, mainly corresponding to different oxidative states. As to expression, expressed by the venom duct.

The protein localises to the secreted. The protein resides in the nematocyst. Its subcellular location is the target cell membrane. Its function is as follows. Pore-forming protein that forms pores of around 1 nm and causes cardiac stimulation and cytolysis. The protein is Conoporin-Cn1 of Conus consors (Singed cone).